Here is a 294-residue protein sequence, read N- to C-terminus: Nucleotide-binding protein Dde_1774 (294 aa).

Residue 14–21 (GLSGAGKS) coordinates ATP. A GTP-binding site is contributed by 66–69 (DLRQ).

It belongs to the RapZ-like family.

Its function is as follows. Displays ATPase and GTPase activities. The sequence is that of Nucleotide-binding protein Dde_1774 from Oleidesulfovibrio alaskensis (strain ATCC BAA-1058 / DSM 17464 / G20) (Desulfovibrio alaskensis).